A 312-amino-acid chain; its full sequence is Peroxisome biogenesis factor 2 (312 aa).

The Peroxisomal matrix portion of the chain corresponds to 1–22 (MAGAGGDKPFAKAGPSPLSRVL). Residues 23–49 (RISQLDAFELDGALEQLVWSQFTQCFQ) traverse the membrane as a helical segment. The Cytoplasmic segment spans residues 50–55 (HFKPGI). A helical transmembrane segment spans residues 56–81 (LTPVEPELKALLQLLLWRFTIYSNSA). Residues 82–105 (TVGQSLLNIRYKNALIPGQKYRPM) lie on the Peroxisomal matrix side of the membrane. A helical membrane pass occupies residues 106–132 (SRPQKFWFALLTVGEKWFRERSHSLFL). Topologically, residues 133–141 (NHPAESNAR) are cytoplasmic. The chain crosses the membrane as a helical span at residues 142 to 168 (KARKVLSILLGLTKAASLVNFLLFLQR). Residues 169 to 195 (GTFPTLTERLLGVQPVFSRPQGPRDIN) lie on the Peroxisomal matrix side of the membrane. The helical transmembrane segment at 196–219 (FQYLNRELLWHGFAEFLIFLLPLI) threads the bilayer. The Cytoplasmic segment spans residues 220–312 (NVWKLKAGVS…LQVGTELLQS (93 aa)). Residues Cys252, Cys255, Cys267, His269, Cys272, Cys275, Cys288, and Cys291 each contribute to the Zn(2+) site. The segment at 252 to 292 (CAICGEWPTMPHSIGCKHVFCYYCVKSNVIADIYFTCPKCG) adopts an RING-type zinc-finger fold.

Belongs to the pex2/pex10/pex12 family. Component of the PEX2-PEX10-PEX12 retrotranslocation channel.

Its subcellular location is the peroxisome membrane. It catalyses the reaction [E2 ubiquitin-conjugating enzyme]-S-ubiquitinyl-L-cysteine + [acceptor protein]-L-cysteine = [E2 ubiquitin-conjugating enzyme]-L-cysteine + [acceptor protein]-S-ubiquitinyl-L-cysteine.. The catalysed reaction is S-ubiquitinyl-[E2 ubiquitin-conjugating enzyme]-L-cysteine + [acceptor protein]-L-lysine = [E2 ubiquitin-conjugating enzyme]-L-cysteine + N(6)-ubiquitinyl-[acceptor protein]-L-lysine.. It functions in the pathway protein modification; protein ubiquitination. E3 ubiquitin-protein ligase component of a retrotranslocation channel required for peroxisome organization by mediating export of the PEX5 receptor from peroxisomes to the cytosol, thereby promoting PEX5 recycling. The retrotranslocation channel is composed of PEX2, PEX10 and PEX12; each subunit contributing transmembrane segments that coassemble into an open channel that specifically allows the passage of PEX5 through the peroxisomal membrane. PEX2 also regulates peroxisome organization by acting as a E3 ubiquitin-protein ligase. The chain is Peroxisome biogenesis factor 2 (pex2) from Danio rerio (Zebrafish).